The following is a 317-amino-acid chain: Olfactory receptor 2B11 (317 aa).

The Extracellular portion of the chain corresponds to 1–29; it reads MKSDNHSFLGDSPKAFILLGVSDRPWLEL. An N-linked (GlcNAc...) asparagine glycan is attached at Asn5. A helical membrane pass occupies residues 30-53; sequence PLFVVLLLSYVLAMLGNVAIILAS. At 54-61 the chain is on the cytoplasmic side; sequence RVDPQLHS. Residues 62 to 83 traverse the membrane as a helical segment; it reads PMYIFLSHLSFLDLCYTTTTVP. Residues 84–104 lie on the Extracellular side of the membrane; the sequence is QMLVNMGSSQKTISYGGCTVQ. Cys101 and Cys193 form a disulfide bridge. The helical transmembrane segment at 105–124 threads the bilayer; that stretch reads YAVFHWLGCTECIVLAAMAL. Over 125–143 the chain is Cytoplasmic; it reads DRYVAICKPLHYAVLMHRA. A helical transmembrane segment spans residues 144–162; sequence LCQQLVALAWLSGFGNSFV. Over 163–199 the chain is Extracellular; it reads QVVLTVQLPFCGRQVLNNFFCEVPAVIKLSCADTAVN. A glycan (N-linked (GlcNAc...) asparagine) is linked at Asn199. A helical transmembrane segment spans residues 200-223; sequence DTILAVLVAFFVLVPLALILLSYG. Residues 224-240 are Cytoplasmic-facing; that stretch reads FIARAVLRIQSSKGRHK. The chain crosses the membrane as a helical span at residues 241-263; sequence AFGTCSSHLMIVSLFYLPAIYMY. Residues 264 to 276 lie on the Extracellular side of the membrane; that stretch reads LQPPSSYSQEQGK. A helical transmembrane segment spans residues 277–296; that stretch reads FISLFYSIITPTLNPFTYTL. The Cytoplasmic portion of the chain corresponds to 297–317; sequence RNKDMKGALRRLLARIWRLCG.

Belongs to the G-protein coupled receptor 1 family.

The protein resides in the cell membrane. Functionally, odorant receptor. The chain is Olfactory receptor 2B11 (OR2B11) from Homo sapiens (Human).